A 359-amino-acid polypeptide reads, in one-letter code: Protein-arginine kinase (359 aa).

The Phosphagen kinase C-terminal domain maps to 25 to 257; sequence IVISSRVRLA…QQVIEQERML (233 aa). ATP-binding positions include 28 to 32, His93, Arg128, 179 to 183, and 210 to 215; these read SSRVR, RASLM, and RGIYGE. The RDXXRA motif of the pArg binding pocket involved in allosteric regulation signature appears at 340–345; sequence RDAKRA.

It belongs to the ATP:guanido phosphotransferase family.

It carries out the reaction L-arginyl-[protein] + ATP = N(omega)-phospho-L-arginyl-[protein] + ADP + H(+). Its activity is regulated as follows. Appears to be allosterically activated by the binding of pArg-containing polypeptides to the pArg-binding pocket localized in the C-terminal domain of McsB. Catalyzes the specific phosphorylation of arginine residues in proteins. This Syntrophomonas wolfei subsp. wolfei (strain DSM 2245B / Goettingen) protein is Protein-arginine kinase.